A 214-amino-acid polypeptide reads, in one-letter code: MRIMLLGAPGAGKGTQAQFIMEKYGIPQISTGDMLRAAVKAGTPLGLEAKKVMDAGQLVSDELIIGLVKERVAQADCEKGFLLDGFPRTIPQADAMADAGIAIDHVVEIDVPDEEIVKRMSGRRVHPGSGRVYHIVFNQPKVEGKDDVTGEDLAIRPDDEESTVRKRLDIYHEQTKPLVEYYGNVAANGQTKYSKFDGTQSVASVSEEIVVALS.

10-15 (GAGKGT) lines the ATP pocket. Positions 30–59 (STGDMLRAAVKAGTPLGLEAKKVMDAGQLV) are NMP. Residues threonine 31, arginine 36, 57 to 59 (QLV), 85 to 88 (GFPR), and glutamine 92 contribute to the AMP site. Residues 122–159 (GRRVHPGSGRVYHIVFNQPKVEGKDDVTGEDLAIRPDD) form an LID region. ATP contacts are provided by residues arginine 123 and 132–133 (VY). Arginine 156 and arginine 167 together coordinate AMP. Glutamine 200 contacts ATP.

Belongs to the adenylate kinase family. In terms of assembly, monomer.

It is found in the cytoplasm. The catalysed reaction is AMP + ATP = 2 ADP. It functions in the pathway purine metabolism; AMP biosynthesis via salvage pathway; AMP from ADP: step 1/1. Its function is as follows. Catalyzes the reversible transfer of the terminal phosphate group between ATP and AMP. Plays an important role in cellular energy homeostasis and in adenine nucleotide metabolism. The protein is Adenylate kinase of Shewanella woodyi (strain ATCC 51908 / MS32).